A 96-amino-acid polypeptide reads, in one-letter code: Co-chaperonin GroES (96 aa).

The protein belongs to the GroES chaperonin family. In terms of assembly, heptamer of 7 subunits arranged in a ring. Interacts with the chaperonin GroEL.

Its subcellular location is the cytoplasm. Together with the chaperonin GroEL, plays an essential role in assisting protein folding. The GroEL-GroES system forms a nano-cage that allows encapsulation of the non-native substrate proteins and provides a physical environment optimized to promote and accelerate protein folding. GroES binds to the apical surface of the GroEL ring, thereby capping the opening of the GroEL channel. This Shewanella frigidimarina (strain NCIMB 400) protein is Co-chaperonin GroES.